A 908-amino-acid chain; its full sequence is DNA (cytosine-5)-methyltransferase 3A (908 aa).

A compositionally biased stretch (polar residues) spans 1–13 (MPSSGPGDTSISS). Disordered stretches follow at residues 1 to 183 (MPSS…PMPR) and 226 to 281 (SQAS…PEYE). Over residues 14–37 (LEREDDRKEGEEQEENRGKEERQE) the composition is skewed to basic and acidic residues. Positions 44 to 54 (KVGRPGRKRKH) are enriched in basic residues. Residues 69 to 80 (TTKSQPTAQDSG) are compositionally biased toward polar residues. Position 102 is a phosphoserine (S102). Over residues 110 to 124 (GAPAEGEGTETPPEA) the composition is skewed to low complexity. T120 carries the post-translational modification Phosphothreonine. K158 participates in a covalent cross-link: Glycyl lysine isopeptide (Lys-Gly) (interchain with G-Cter in SUMO2). R167 carries the omega-N-methylarginine modification. The segment at 195 to 399 (SKRKRDEWLA…DTGKAVEVQN (205 aa)) is interaction with DNMT1 and DNMT3B. S239 and S251 each carry phosphoserine. Residues 242 to 256 (AVQQPTDPASPTVAT) are compositionally biased toward polar residues. T257 bears the Phosphothreonine mark. Residues 257–315 (TPEPVGADAGDKNATKAADDEPEYEDGRGFGIGELVWGKLRGFSWWPGRIVSWWMTGRS) form the PWWP domain. The span at 265 to 275 (AGDKNATKAAD) shows a compositional bias: basic and acidic residues. Residues S386 and S389 each carry the phosphoserine modification. The tract at residues 443 to 462 (AYAPPPPAKKPRKSTTEKPK) is disordered. The region spanning 478–610 (EVRQKCRNIE…LQMFFANNHD (133 aa)) is the ADD domain. A GATA-type; atypical zinc finger spans residues 489–519 (ICISCGSLNVTLEHPLFIGGMCQNCKNCFLE). The segment at 490-582 (CISCGSLNVT…KEDPWNCYMC (93 aa)) is interaction with the PRC2/EED-EZH2 complex. The PHD-type; atypical zinc-finger motif lies at 530–586 (QSYCTICCGGREVLMCGNNNCCRCFCVECVDLLVGPGAAQAAIKEDPWNCYMCGHKG). Residues 630–908 (IRVLSLFDGI…APLKEYFACV (279 aa)) enclose the SAM-dependent MTase C5-type domain. S-adenosyl-L-methionine-binding positions include 637–641 (DGIAT), E660, and 682–684 (DVR). The active site involves C706. C706 carries the post-translational modification S-methylcysteine; by autocatalysis. Position 887–889 (887–889 (RSW)) interacts with S-adenosyl-L-methionine.

This sequence belongs to the class I-like SAM-binding methyltransferase superfamily. C5-methyltransferase family. Heterotetramer composed of 1 DNMT3A homodimer and 2 DNMT3L subunits (DNMT3L-DNMT3A-DNMT3A-DNMT3L). Interacts with DNMT1 and DNMT3B. Interacts with MPHOSPH8. Interacts with histone H3 that is not methylated at 'Lys-4' (H3K4). Binds the ZBTB18 transcriptional repressor. Interacts with SETDB1. Associates with HDAC1 through its ADD domain. Interacts with UHRF1. Interacts with the PRC2/EED-EZH2 complex. Interacts with UBC9, PIAS1 and PIAS2. Interacts with SPOCD1. Interacts with ZNF263; recruited to the SIX3 promoter along with other proteins involved in chromatin modification and transcriptional corepression where it contributes to transcriptional repression. Post-translationally, sumoylated; sumoylation disrupts the ability to interact with histone deacetylases (HDAC1 and HDAC2) and repress transcription. In terms of processing, auto-methylated at Cys-706: auto-methylation takes place in absence of DNA substrate and inactivates the DNA methyltransferase activity. Inactivation by auto-methylation may be used to inactivate unused DNA methyltransferases in the cell.

The protein localises to the nucleus. It localises to the chromosome. The protein resides in the cytoplasm. The catalysed reaction is a 2'-deoxycytidine in DNA + S-adenosyl-L-methionine = a 5-methyl-2'-deoxycytidine in DNA + S-adenosyl-L-homocysteine + H(+). It catalyses the reaction L-cysteinyl-[protein] + S-adenosyl-L-methionine = S-methyl-L-cysteinyl-[protein] + S-adenosyl-L-homocysteine + H(+). Activated by binding to the regulatory factor DNMT3L. Auto-methylation at Cys-706 in absence of DNA inactivates the DNA methyltransferase activity. Functionally, required for genome-wide de novo methylation and is essential for the establishment of DNA methylation patterns during development. DNA methylation is coordinated with methylation of histones. It modifies DNA in a non-processive manner and also methylates non-CpG sites. May preferentially methylate DNA linker between 2 nucleosomal cores and is inhibited by histone H1. Plays a role in paternal and maternal imprinting. Required for methylation of most imprinted loci in germ cells. Acts as a transcriptional corepressor for ZBTB18. Recruited to trimethylated 'Lys-36' of histone H3 (H3K36me3) sites. Can actively repress transcription through the recruitment of HDAC activity. Also has weak auto-methylation activity on Cys-706 in absence of DNA. The sequence is that of DNA (cytosine-5)-methyltransferase 3A (Dnmt3a) from Rattus norvegicus (Rat).